The primary structure comprises 222 residues: Triosephosphate isomerase (222 aa).

9-11 (NYK) is a binding site for substrate. The active-site Electrophile is the H93. The active-site Proton acceptor is E141. Substrate-binding positions include I146, G181, and 202-203 (AS).

Belongs to the triosephosphate isomerase family. In terms of assembly, homotetramer; dimer of dimers.

Its subcellular location is the cytoplasm. The catalysed reaction is D-glyceraldehyde 3-phosphate = dihydroxyacetone phosphate. It functions in the pathway carbohydrate biosynthesis; gluconeogenesis. Its pathway is carbohydrate degradation; glycolysis; D-glyceraldehyde 3-phosphate from glycerone phosphate: step 1/1. Involved in the gluconeogenesis. Catalyzes stereospecifically the conversion of dihydroxyacetone phosphate (DHAP) to D-glyceraldehyde-3-phosphate (G3P). The protein is Triosephosphate isomerase of Methanosarcina acetivorans (strain ATCC 35395 / DSM 2834 / JCM 12185 / C2A).